The chain runs to 398 residues: Argininosuccinate synthase (398 aa).

9-17 serves as a coordination point for ATP; it reads AYSGGLDTS. L-citrulline-binding residues include Tyr87 and Ser92. Gly117 contacts ATP. Thr119, Asn123, and Asp124 together coordinate L-aspartate. Asn123 is a binding site for L-citrulline. L-citrulline-binding residues include Arg127, Ser176, Ser185, Glu261, and Tyr273.

It belongs to the argininosuccinate synthase family. Type 1 subfamily. Homotetramer.

The protein localises to the cytoplasm. The enzyme catalyses L-citrulline + L-aspartate + ATP = 2-(N(omega)-L-arginino)succinate + AMP + diphosphate + H(+). Its pathway is amino-acid biosynthesis; L-arginine biosynthesis; L-arginine from L-ornithine and carbamoyl phosphate: step 2/3. This is Argininosuccinate synthase from Clostridium tetani (strain Massachusetts / E88).